Reading from the N-terminus, the 263-residue chain is tRNA pseudouridine synthase A (263 aa).

Asp51 serves as the catalytic Nucleophile. A substrate-binding site is contributed by Tyr109.

Belongs to the tRNA pseudouridine synthase TruA family. As to quaternary structure, homodimer.

It carries out the reaction uridine(38/39/40) in tRNA = pseudouridine(38/39/40) in tRNA. Functionally, formation of pseudouridine at positions 38, 39 and 40 in the anticodon stem and loop of transfer RNAs. The polypeptide is tRNA pseudouridine synthase A (Pseudoalteromonas atlantica (strain T6c / ATCC BAA-1087)).